A 205-amino-acid polypeptide reads, in one-letter code: Cytochrome c biogenesis ATP-binding export protein CcmA (205 aa).

The 203-residue stretch at 2-204 folds into the ABC transporter domain; it reads LEVSNLTAIR…SPKLRKIKLG (203 aa). ATP is bound at residue 34–41; the sequence is GRNGTGKT.

Belongs to the ABC transporter superfamily. CcmA exporter (TC 3.A.1.107) family. In terms of assembly, the complex is composed of two ATP-binding proteins (CcmA) and two transmembrane proteins (CcmB).

Its subcellular location is the cell inner membrane. The catalysed reaction is heme b(in) + ATP + H2O = heme b(out) + ADP + phosphate + H(+). In terms of biological role, part of the ABC transporter complex CcmAB involved in the biogenesis of c-type cytochromes; once thought to export heme, this seems not to be the case, but its exact role is uncertain. Responsible for energy coupling to the transport system. The sequence is that of Cytochrome c biogenesis ATP-binding export protein CcmA from Vibrio parahaemolyticus serotype O3:K6 (strain RIMD 2210633).